We begin with the raw amino-acid sequence, 241 residues long: UDP-2,3-diacylglucosamine hydrolase (241 aa).

Mn(2+) is bound by residues aspartate 9, histidine 11, aspartate 42, asparagine 79, and histidine 114. 79 to 80 is a binding site for substrate; it reads NR. The substrate site is built by aspartate 122, serine 160, asparagine 164, lysine 167, and histidine 195. Mn(2+) is bound by residues histidine 195 and histidine 197.

The protein belongs to the LpxH family. Mn(2+) serves as cofactor.

Its subcellular location is the cell inner membrane. It catalyses the reaction UDP-2-N,3-O-bis[(3R)-3-hydroxytetradecanoyl]-alpha-D-glucosamine + H2O = 2-N,3-O-bis[(3R)-3-hydroxytetradecanoyl]-alpha-D-glucosaminyl 1-phosphate + UMP + 2 H(+). It functions in the pathway glycolipid biosynthesis; lipid IV(A) biosynthesis; lipid IV(A) from (3R)-3-hydroxytetradecanoyl-[acyl-carrier-protein] and UDP-N-acetyl-alpha-D-glucosamine: step 4/6. In terms of biological role, hydrolyzes the pyrophosphate bond of UDP-2,3-diacylglucosamine to yield 2,3-diacylglucosamine 1-phosphate (lipid X) and UMP by catalyzing the attack of water at the alpha-P atom. Involved in the biosynthesis of lipid A, a phosphorylated glycolipid that anchors the lipopolysaccharide to the outer membrane of the cell. The protein is UDP-2,3-diacylglucosamine hydrolase of Shewanella frigidimarina (strain NCIMB 400).